We begin with the raw amino-acid sequence, 646 residues long: Translation initiation factor IF-2 (646 aa).

Positions 146–315 (PRPPVVTVMG…LLVAEMEELR (170 aa)) constitute a tr-type G domain. The interval 155 to 162 (GHVDHGKT) is G1. 155–162 (GHVDHGKT) lines the GTP pocket. Residues 180 to 184 (GITQH) are G2. The segment at 201–204 (DTPG) is G3. Residues 201–205 (DTPGH) and 255–258 (NKID) each bind GTP. The G4 stretch occupies residues 255-258 (NKID). The G5 stretch occupies residues 291–293 (SAK).

It belongs to the TRAFAC class translation factor GTPase superfamily. Classic translation factor GTPase family. IF-2 subfamily.

It is found in the cytoplasm. One of the essential components for the initiation of protein synthesis. Protects formylmethionyl-tRNA from spontaneous hydrolysis and promotes its binding to the 30S ribosomal subunits. Also involved in the hydrolysis of GTP during the formation of the 70S ribosomal complex. This Clostridioides difficile (strain 630) (Peptoclostridium difficile) protein is Translation initiation factor IF-2.